Here is a 151-residue protein sequence, read N- to C-terminus: Large ribosomal subunit protein bL9 (151 aa).

The protein belongs to the bacterial ribosomal protein bL9 family.

Its function is as follows. Binds to the 23S rRNA. This is Large ribosomal subunit protein bL9 from Francisella tularensis subsp. novicida (strain U112).